The chain runs to 429 residues: Ribonuclease E/G-like protein (429 aa).

Residues aspartate 290 and aspartate 332 each coordinate Mg(2+).

The protein belongs to the RNase E/G family. The cofactor is Mg(2+).

Its subcellular location is the plastid. It localises to the chloroplast stroma. Its function is as follows. Involved in intercistronic processing of primary transcripts from chloroplast operons. The endonucleolytic activity of the enzyme depends on the number of phosphates at the 5' end, is inhibited by structured RNA, and preferentially cleaves A/U-rich sequences. The sequence is that of Ribonuclease E/G-like protein (rne) from Guillardia theta (Cryptophyte).